A 291-amino-acid polypeptide reads, in one-letter code: ATP synthase gamma chain (291 aa).

The protein belongs to the ATPase gamma chain family. In terms of assembly, F-type ATPases have 2 components, CF(1) - the catalytic core - and CF(0) - the membrane proton channel. CF(1) has five subunits: alpha(3), beta(3), gamma(1), delta(1), epsilon(1). CF(0) has three main subunits: a, b and c.

The protein resides in the cell inner membrane. In terms of biological role, produces ATP from ADP in the presence of a proton gradient across the membrane. The gamma chain is believed to be important in regulating ATPase activity and the flow of protons through the CF(0) complex. This Burkholderia mallei (strain NCTC 10247) protein is ATP synthase gamma chain.